The following is a 243-amino-acid chain: tRNA pseudouridine synthase A (243 aa).

The active-site Nucleophile is Asp53. Tyr111 lines the substrate pocket.

It belongs to the tRNA pseudouridine synthase TruA family. Homodimer.

The enzyme catalyses uridine(38/39/40) in tRNA = pseudouridine(38/39/40) in tRNA. Its function is as follows. Formation of pseudouridine at positions 38, 39 and 40 in the anticodon stem and loop of transfer RNAs. The polypeptide is tRNA pseudouridine synthase A (Chlorobium chlorochromatii (strain CaD3)).